The chain runs to 116 residues: Propanediol dehydratase-reactivating factor small subunit (116 aa).

E31 lines the Mg(2+) pocket.

Belongs to the DdrB/PduH family. Forms a heterotetramer PduG(2)/PduH(2). The cofactor is Mg(2+).

Its subcellular location is the bacterial microcompartment. The enzyme catalyses ATP + H2O = ADP + phosphate + H(+). It functions in the pathway polyol metabolism; 1,2-propanediol degradation. Its function is as follows. Small subunit of the propanediol dehydratase-reactivating factor (DDR), which reactivates suicidally inhibited adenosylcobalamin-dependent propanediol dehydratase (diol dehydratase, DDH) found in the bacterial microcompartment (BMC) dedicated to 1,2-propanediol (1,2-PD) degradation. Reactivates inactivated DDH in the presence of ATP, Mg(2+) and free adenosylcobalamin (AdoCbl), by mediating the exchange of the tightly bound damaged cofactor AdoCbl for a free intact one. The 1,2-PD-specific bacterial microcompartment (BMC) concentrates low levels of 1,2-PD catabolic enzymes, concentrates volatile reaction intermediates thus enhancing pathway flux and keeps the level of toxic, mutagenic propionaldehyde low. In Salmonella typhimurium (strain LT2 / SGSC1412 / ATCC 700720), this protein is Propanediol dehydratase-reactivating factor small subunit.